We begin with the raw amino-acid sequence, 437 residues long: Ribosomal protein uS12 methylthiotransferase RimO (437 aa).

In terms of domain architecture, MTTase N-terminal spans 4–114; sequence PRVSFVSLGC…VMAAVHEAAP (111 aa). Residues Cys13, Cys49, Cys78, Cys145, Cys149, and Cys152 each coordinate [4Fe-4S] cluster. Positions 131–369 constitute a Radical SAM core domain; sequence LTPRHYAYLK…MQRQQKISAT (239 aa). The TRAM domain occupies 372-437; that stretch reads AKKVGKRLPV…DAYDLYGSAV (66 aa).

This sequence belongs to the methylthiotransferase family. RimO subfamily. [4Fe-4S] cluster is required as a cofactor.

The protein resides in the cytoplasm. The enzyme catalyses L-aspartate(89)-[ribosomal protein uS12]-hydrogen + (sulfur carrier)-SH + AH2 + 2 S-adenosyl-L-methionine = 3-methylsulfanyl-L-aspartate(89)-[ribosomal protein uS12]-hydrogen + (sulfur carrier)-H + 5'-deoxyadenosine + L-methionine + A + S-adenosyl-L-homocysteine + 2 H(+). Its function is as follows. Catalyzes the methylthiolation of an aspartic acid residue of ribosomal protein uS12. The chain is Ribosomal protein uS12 methylthiotransferase RimO from Mesorhizobium japonicum (strain LMG 29417 / CECT 9101 / MAFF 303099) (Mesorhizobium loti (strain MAFF 303099)).